The sequence spans 299 residues: Acetylglutamate kinase (299 aa).

Residues Gly72–Gly73, Arg94, and Asn196 each bind substrate.

Belongs to the acetylglutamate kinase family. ArgB subfamily.

Its subcellular location is the cytoplasm. It carries out the reaction N-acetyl-L-glutamate + ATP = N-acetyl-L-glutamyl 5-phosphate + ADP. It participates in amino-acid biosynthesis; L-arginine biosynthesis; N(2)-acetyl-L-ornithine from L-glutamate: step 2/4. Its function is as follows. Catalyzes the ATP-dependent phosphorylation of N-acetyl-L-glutamate. In Burkholderia ambifaria (strain MC40-6), this protein is Acetylglutamate kinase.